The primary structure comprises 501 residues: Actin-binding protein WASF3 (501 aa).

The stretch at Asn57 to Gln93 forms a coiled coil. Residue Tyr151 is modified to Phosphotyrosine; by ABL1. A coiled-coil region spans residues Lys162–Asn206. Residues Glu170–Leu443 are disordered. Residues Gln182–Val192 show a composition bias toward basic and acidic residues. Positions Arg219–Asp237 are enriched in polar residues. A Phosphotyrosine; by ABL1 modification is found at Tyr248. Residues His256–Tyr267 show a composition bias toward polar residues. The segment covering Gln302–Ala312 has biased composition (pro residues). Position 337 is a phosphotyrosine; by ABL1 (Tyr337). Composition is skewed to pro residues over residues Ser341–Ile352 and Ala394–Pro410. Over residues Ser411–Pro422 the composition is skewed to low complexity. One can recognise a WH2 domain in the interval Ala439–Val456. Residue Tyr485 is modified to Phosphotyrosine; by ABL1.

This sequence belongs to the SCAR/WAVE family. Binds actin and the Arp2/3 complex. Post-translationally, phosphorylation by ABL1 promotes lamellipodia formation and cell migration.

It localises to the cytoplasm. It is found in the cytoskeleton. In terms of biological role, downstream effector molecules involved in the transmission of signals from tyrosine kinase receptors and small GTPases to the actin cytoskeleton. Plays a role in the regulation of cell morphology and cytoskeletal organization. Required in the control of cell shape. This chain is Actin-binding protein WASF3 (Wasf3), found in Mus musculus (Mouse).